The primary structure comprises 227 residues: Cytochrome c oxidase subunit 2 (227 aa).

Residues 1 to 14 (MAYPLQLGLQDATS) are Mitochondrial intermembrane-facing. A helical membrane pass occupies residues 15-45 (PIMEELMNFHDHTLMIVFLISSLVLYVISSM). Over 46–59 (LTTKLTHTSTMDAQ) the chain is Mitochondrial matrix. Residues 60-87 (EVETIWTILPAVILIMIALPSLRILYMM) form a helical membrane-spanning segment. Residues 88–227 (DEINNPVLTV…NFETWSVSMI (140 aa)) are Mitochondrial intermembrane-facing. Cu cation is bound by residues His161, Cys196, Glu198, Cys200, His204, and Met207. Position 198 (Glu198) interacts with Mg(2+).

Belongs to the cytochrome c oxidase subunit 2 family. In terms of assembly, component of the cytochrome c oxidase (complex IV, CIV), a multisubunit enzyme composed of 14 subunits. The complex is composed of a catalytic core of 3 subunits MT-CO1, MT-CO2 and MT-CO3, encoded in the mitochondrial DNA, and 11 supernumerary subunits COX4I, COX5A, COX5B, COX6A, COX6B, COX6C, COX7A, COX7B, COX7C, COX8 and NDUFA4, which are encoded in the nuclear genome. The complex exists as a monomer or a dimer and forms supercomplexes (SCs) in the inner mitochondrial membrane with NADH-ubiquinone oxidoreductase (complex I, CI) and ubiquinol-cytochrome c oxidoreductase (cytochrome b-c1 complex, complex III, CIII), resulting in different assemblies (supercomplex SCI(1)III(2)IV(1) and megacomplex MCI(2)III(2)IV(2)). Found in a complex with TMEM177, COA6, COX18, COX20, SCO1 and SCO2. Interacts with TMEM177 in a COX20-dependent manner. Interacts with COX20. Interacts with COX16. The cofactor is Cu cation.

It is found in the mitochondrion inner membrane. The enzyme catalyses 4 Fe(II)-[cytochrome c] + O2 + 8 H(+)(in) = 4 Fe(III)-[cytochrome c] + 2 H2O + 4 H(+)(out). Functionally, component of the cytochrome c oxidase, the last enzyme in the mitochondrial electron transport chain which drives oxidative phosphorylation. The respiratory chain contains 3 multisubunit complexes succinate dehydrogenase (complex II, CII), ubiquinol-cytochrome c oxidoreductase (cytochrome b-c1 complex, complex III, CIII) and cytochrome c oxidase (complex IV, CIV), that cooperate to transfer electrons derived from NADH and succinate to molecular oxygen, creating an electrochemical gradient over the inner membrane that drives transmembrane transport and the ATP synthase. Cytochrome c oxidase is the component of the respiratory chain that catalyzes the reduction of oxygen to water. Electrons originating from reduced cytochrome c in the intermembrane space (IMS) are transferred via the dinuclear copper A center (CU(A)) of subunit 2 and heme A of subunit 1 to the active site in subunit 1, a binuclear center (BNC) formed by heme A3 and copper B (CU(B)). The BNC reduces molecular oxygen to 2 water molecules using 4 electrons from cytochrome c in the IMS and 4 protons from the mitochondrial matrix. This is Cytochrome c oxidase subunit 2 (MT-CO2) from Malacothrix typica (Long-eared mouse).